The primary structure comprises 180 residues: Large ribosomal subunit protein uL5 (180 aa).

It belongs to the universal ribosomal protein uL5 family. In terms of assembly, forms a bridge to the 30S subunit in the 70S ribosome. Part of the 50S ribosomal subunit; part of the 5S rRNA/L5/L18/L25 (CTC) subcomplex. Is known to contact the 5S rRNA, 23S rRNA and the P site tRNA.

Its function is as follows. This is one of the proteins that bind and probably mediate the attachment of the 5S RNA into the large ribosomal subunit, where it forms part of the central protuberance. In the 70S ribosome it contacts protein S13 of the 30S subunit (bridge B1b), connecting the 2 subunits; this bridge is implicated in subunit movement. Contacts the P site tRNA; the 5S rRNA and some of its associated proteins might help stabilize positioning of ribosome-bound tRNAs. The chain is Large ribosomal subunit protein uL5 (rplE) from Deinococcus radiodurans (strain ATCC 13939 / DSM 20539 / JCM 16871 / CCUG 27074 / LMG 4051 / NBRC 15346 / NCIMB 9279 / VKM B-1422 / R1).